Here is a 1349-residue protein sequence, read N- to C-terminus: Membrane-associated phosphatidylinositol transfer protein 2 (1349 aa).

The disordered stretch occupies residues 262–344 (EDGEEATELV…RDSDESSDDE (83 aa)). Positions 302-322 (KQWSTSSKSSRSSKRGASPSR) are enriched in low complexity. Ser-337, Ser-341, Ser-368, and Ser-589 each carry phosphoserine. Over residues 618–631 (GGGGGSSGGGGSSG) the composition is skewed to gly residues. The disordered stretch occupies residues 618-671 (GGGGGSSGGGGSSGGSSLESSRHLSRSNVDIPRSNGTEDPKRQLPRKRSDSSTY). Ser-644 carries the post-translational modification Phosphoserine. Residues 653 to 667 (GTEDPKRQLPRKRSD) are compositionally biased toward basic and acidic residues. Residues Ser-700, Ser-701, and Ser-702 each carry the phosphoserine modification. A DDHD domain is found at 715-963 (FDFEITDLFL…VSFLLRQVMR (249 aa)). Arg-828 is subject to Omega-N-methylarginine. Positions 876-900 (LPAPSPTTPGPHPPARKASPGLERA) are disordered. The segment covering 878–888 (APSPTTPGPHP) has biased composition (pro residues). Ser-1277 is subject to Phosphoserine. The segment at 1296-1326 (TISAQPSGPSHRHERTQSQADGEQRGQRSMS) is disordered.

The protein belongs to the PtdIns transfer protein family. PI transfer class IIA subfamily. Interacts with PTK2B via its C-terminus. Interacts with CPNE4 (via VWFA domain). Highly expressed in brain, heart, ovary, testis and thymus. Detected in small intestine, prostate, pancreas, skeletal muscle, liver, colon and placenta.

It is found in the endomembrane system. Catalyzes the transfer of phosphatidylinositol and phosphatidylcholine between membranes (in vitro). Binds calcium ions. In Homo sapiens (Human), this protein is Membrane-associated phosphatidylinositol transfer protein 2 (PITPNM2).